The sequence spans 644 residues: Exoribonuclease 2 (644 aa).

The region spanning Arg189–Lys516 is the RNB domain. In terms of domain architecture, S1 motif spans Asp561–Val643.

The protein belongs to the RNR ribonuclease family. RNase II subfamily.

The protein localises to the cytoplasm. It carries out the reaction Exonucleolytic cleavage in the 3'- to 5'-direction to yield nucleoside 5'-phosphates.. Functionally, involved in mRNA degradation. Hydrolyzes single-stranded polyribonucleotides processively in the 3' to 5' direction. This is Exoribonuclease 2 from Escherichia coli (strain UTI89 / UPEC).